The following is a 677-amino-acid chain: Methionine--tRNA ligase (677 aa).

The short motif at 15–25 is the 'HIGH' region element; that stretch reads PYANGSIHLGH. Zn(2+) is bound by residues cysteine 146, cysteine 149, cysteine 159, and cysteine 162. The short motif at 333–337 is the 'KMSKS' region element; sequence KMSKS. Lysine 336 is an ATP binding site. A tRNA-binding domain is found at 575–677; sequence DFAKIDLRVA…DGAKPGQQVK (103 aa).

The protein belongs to the class-I aminoacyl-tRNA synthetase family. MetG type 1 subfamily. In terms of assembly, homodimer. Zn(2+) is required as a cofactor.

It is found in the cytoplasm. The enzyme catalyses tRNA(Met) + L-methionine + ATP = L-methionyl-tRNA(Met) + AMP + diphosphate. Its function is as follows. Is required not only for elongation of protein synthesis but also for the initiation of all mRNA translation through initiator tRNA(fMet) aminoacylation. The protein is Methionine--tRNA ligase of Salmonella typhimurium (strain LT2 / SGSC1412 / ATCC 700720).